Here is a 170-residue protein sequence, read N- to C-terminus: Cathelicidin antimicrobial peptide (170 aa).

The signal sequence occupies residues 1–30 (MKTQRDGHSLGGWSLMLLLLGLLMPLAIVA). The propeptide at 31 to 131 (QVLSYKEAVL…DISCDKDNRR (101 aa)) is cathelin-like domain (CLD). Disulfide bonds link Cys86/Cys97 and Cys108/Cys125. Residues 150-162 (FKRIVQRIKDFLQ) are active core.

Belongs to the cathelicidin family. Monomer, homodimer or homotrimer (in vitro). Oligomerizes as tetra- or hexamer in solution (in vitro). Proteolytically cleaved by proteinase PRTN3 into antibacterial peptide LL-37. Proteolytically cleaved by cathepsin CTSG and neutrophil elastase ELANE. In terms of processing, resistant to proteolytic degradation in solution, and when bound to both zwitterionic (mimicking mammalian membranes) and negatively charged membranes (mimicking bacterial membranes). Post-translationally, after secretion onto the skin surface, the CAMP gene product is processed by a serine protease-dependent mechanism into multiple novel antimicrobial peptides distinct from and shorter than cathelicidin LL-37. These peptides show enhanced antimicrobial action, acquiring the ability to kill skin pathogens such as S.aureus, E.coli and C.albicans. These peptides have lost the ability to stimulate CXCL8/IL8 release from keratinocytes. The peptides act synergistically, killing bacteria at lower concentrations when present together, and maintain activity at increased salt condition.

It localises to the secreted. The protein localises to the vesicle. In terms of biological role, antimicrobial protein that is an integral component of the innate immune system. Binds to bacterial lipopolysaccharides (LPS). Acts via neutrophil N-formyl peptide receptors to enhance the release of CXCL2. Postsecretory processing generates multiple cathelicidin antimicrobial peptides with various lengths which act as a topical antimicrobial defense in sweat on skin. The unprocessed precursor form, cathelicidin antimicrobial peptide, inhibits the growth of Gram-negative E.coli and E.aerogenes with efficiencies comparable to that of the mature peptide LL-37 (in vitro). Its function is as follows. Antimicrobial peptide that is an integral component of the innate immune system. Binds to bacterial lipopolysaccharides (LPS). Causes membrane permeabilization by forming transmembrane pores (in vitro). Causes lysis of E.coli. Exhibits antimicrobial activity against Gram-negative bacteria such as P.aeruginosa, S.typhimurium, E.aerogenes, E.coli and P.syringae, Gram-positive bacteria such as L.monocytogenes, S.epidermidis, S.pyogenes and S.aureus, as well as vancomycin-resistant enterococci (in vitro). Exhibits antimicrobial activity against methicillin-resistant S.aureus, P.mirabilis, and C.albicans in low-salt media, but not in media containing 100 mM NaCl (in vitro). Forms chiral supramolecular assemblies with quinolone signal (PQS) molecules of P.aeruginosa, which may lead to interference of bacterial quorum signaling and perturbance of bacterial biofilm formation. May form supramolecular fiber-like assemblies on bacterial membranes. Induces cytokine and chemokine producation as well as TNF/TNFA and CSF2/GMCSF production in normal human keratinocytes. Exhibits hemolytic activity against red blood cells. Exhibits antimicrobial activity against E.coli and B.megaterium (in vitro). The polypeptide is Cathelicidin antimicrobial peptide (Hylobates moloch (Silvery gibbon)).